Reading from the N-terminus, the 467-residue chain is Siroheme synthase 2 (467 aa).

The precorrin-2 dehydrogenase /sirohydrochlorin ferrochelatase stretch occupies residues 1–204 (MDYLPIFCQL…NDVALAERQI (204 aa)). Residues 22–23 (EI) and 43–44 (CS) contribute to the NAD(+) site. Serine 128 is modified (phosphoserine). Positions 216–467 (GEVVLVGAGP…EPSQPLAQMA (252 aa)) are uroporphyrinogen-III C-methyltransferase. Proline 225 provides a ligand contact to S-adenosyl-L-methionine. The Proton acceptor role is filled by aspartate 248. Catalysis depends on lysine 270, which acts as the Proton donor. Residues 301–303 (GGD), isoleucine 306, 331–332 (TA), methionine 382, and glycine 411 each bind S-adenosyl-L-methionine.

The protein in the N-terminal section; belongs to the precorrin-2 dehydrogenase / sirohydrochlorin ferrochelatase family. In the C-terminal section; belongs to the precorrin methyltransferase family.

It catalyses the reaction uroporphyrinogen III + 2 S-adenosyl-L-methionine = precorrin-2 + 2 S-adenosyl-L-homocysteine + H(+). The catalysed reaction is precorrin-2 + NAD(+) = sirohydrochlorin + NADH + 2 H(+). The enzyme catalyses siroheme + 2 H(+) = sirohydrochlorin + Fe(2+). Its pathway is cofactor biosynthesis; adenosylcobalamin biosynthesis; precorrin-2 from uroporphyrinogen III: step 1/1. The protein operates within cofactor biosynthesis; adenosylcobalamin biosynthesis; sirohydrochlorin from precorrin-2: step 1/1. It functions in the pathway porphyrin-containing compound metabolism; siroheme biosynthesis; precorrin-2 from uroporphyrinogen III: step 1/1. It participates in porphyrin-containing compound metabolism; siroheme biosynthesis; siroheme from sirohydrochlorin: step 1/1. Its pathway is porphyrin-containing compound metabolism; siroheme biosynthesis; sirohydrochlorin from precorrin-2: step 1/1. Functionally, multifunctional enzyme that catalyzes the SAM-dependent methylations of uroporphyrinogen III at position C-2 and C-7 to form precorrin-2 via precorrin-1. Then it catalyzes the NAD-dependent ring dehydrogenation of precorrin-2 to yield sirohydrochlorin. Finally, it catalyzes the ferrochelation of sirohydrochlorin to yield siroheme. The polypeptide is Siroheme synthase 2 (Serratia proteamaculans (strain 568)).